Consider the following 66-residue polypeptide: Large ribosomal subunit protein bL35 (66 aa).

Positions 1 to 16 (MPKQKTHRASAKRFKR) are enriched in basic residues. The tract at residues 1-20 (MPKQKTHRASAKRFKRTGSG) is disordered.

Belongs to the bacterial ribosomal protein bL35 family.

In Streptococcus thermophilus (strain ATCC BAA-250 / LMG 18311), this protein is Large ribosomal subunit protein bL35.